Consider the following 425-residue polypeptide: Dihydroorotase (425 aa).

Positions 56 and 58 each coordinate Zn(2+). Residues 58-60 and Asn-90 contribute to the substrate site; that span reads HWR. 3 residues coordinate Zn(2+): Asp-147, His-174, and His-227. Residue Asn-273 coordinates substrate. Residue Asp-300 coordinates Zn(2+). Asp-300 is a catalytic residue. Substrate-binding positions include His-304 and 318 to 319; that span reads FG.

The protein belongs to the metallo-dependent hydrolases superfamily. DHOase family. Class I DHOase subfamily. Zn(2+) is required as a cofactor.

The catalysed reaction is (S)-dihydroorotate + H2O = N-carbamoyl-L-aspartate + H(+). It functions in the pathway pyrimidine metabolism; UMP biosynthesis via de novo pathway; (S)-dihydroorotate from bicarbonate: step 3/3. Catalyzes the reversible cyclization of carbamoyl aspartate to dihydroorotate. The chain is Dihydroorotase from Fusobacterium nucleatum subsp. nucleatum (strain ATCC 25586 / DSM 15643 / BCRC 10681 / CIP 101130 / JCM 8532 / KCTC 2640 / LMG 13131 / VPI 4355).